Reading from the N-terminus, the 700-residue chain is Putative proline-rich receptor-like protein kinase PERK6 (700 aa).

The disordered stretch occupies residues 1–180; sequence MAEGQSPENS…SGGGSNSSGN (180 aa). The Extracellular segment spans residues 1-186; it reads MAEGQSPENS…SSGNNEPNTA (186 aa). Pro residues-rich tracts occupy residues 9-19 and 29-47; these read NSPPSPTPPSP and SPPP…PPPD. The span at 48 to 137 shows a compositional bias: low complexity; sequence DSSNGSPQPP…GNNNDNNNQN (90 aa). Asn176 carries an N-linked (GlcNAc...) asparagine glycan. Residues 187–207 traverse the membrane as a helical segment; the sequence is AIVGIVAGAGLLFLVMILFCV. Residues 208–700 lie on the Cytoplasmic side of the membrane; that stretch reads CCCRKKKKKH…NNKTTPSRDH (493 aa). Residues 249 to 315 form a disordered region; sequence NLSQQYPGSN…GPSVPPPHPS (67 aa). The span at 255–265 shows a compositional bias: low complexity; the sequence is PGSNGNNNWMN. Residues 266-286 are compositionally biased toward pro residues; the sequence is SPPPPPPGSWQPSPPPPPPPV. Thr326 carries the phosphothreonine modification. Residues 337-615 enclose the Protein kinase domain; it reads FSQSRLLGQG…VRALEGDATL (279 aa). ATP is bound by residues 343–351 and Lys365; that span reads LGQGGFGYV. Phosphotyrosine is present on Tyr410. Asp461 acts as the Proton acceptor in catalysis. Phosphoserine occurs at positions 465 and 494. Thr495 and Thr500 each carry phosphothreonine. A Phosphotyrosine modification is found at Tyr508. Disordered stretches follow at residues 616 to 642 and 659 to 700; these read DDLS…DSST and EYGA…SRDH. The span at 689–700 shows a compositional bias: polar residues; the sequence is ANNNKTTPSRDH.

The protein belongs to the protein kinase superfamily. Ser/Thr protein kinase family. As to expression, mostly expressed in flower buds.

Its subcellular location is the cell membrane. It catalyses the reaction L-seryl-[protein] + ATP = O-phospho-L-seryl-[protein] + ADP + H(+). The catalysed reaction is L-threonyl-[protein] + ATP = O-phospho-L-threonyl-[protein] + ADP + H(+). The sequence is that of Putative proline-rich receptor-like protein kinase PERK6 (PERK6) from Arabidopsis thaliana (Mouse-ear cress).